The chain runs to 151 residues: NADH dehydrogenase [ubiquinone] 1 beta subcomplex subunit 11, mitochondrial (151 aa).

Residues 1 to 29 (MAARLLSLYGRCLSAAGAMRGLPAARVRW) constitute a mitochondrion transit peptide. The segment at 40–62 (GVEKKRQREPTMQWQEDPEPEDE) is disordered. Residues 87–107 (AVFFFGFSIVLVFGTTFVAYV) traverse the membrane as a helical segment.

Belongs to the complex I NDUFB11 subunit family. In terms of assembly, complex I is composed of 45 different subunits. Interacts with BCAP31.

It is found in the mitochondrion inner membrane. In terms of biological role, accessory subunit of the mitochondrial membrane respiratory chain NADH dehydrogenase (Complex I), that is believed not to be involved in catalysis. Complex I functions in the transfer of electrons from NADH to the respiratory chain. The immediate electron acceptor for the enzyme is believed to be ubiquinone. The sequence is that of NADH dehydrogenase [ubiquinone] 1 beta subcomplex subunit 11, mitochondrial (Ndufb11) from Mus musculus (Mouse).